Consider the following 820-residue polypeptide: G-type lectin S-receptor-like serine/threonine-protein kinase At1g11300 (820 aa).

The N-terminal stretch at 1-26 is a signal peptide; the sequence is MRLHESSSPFVCILVLSCFFLSVSLA. The 124-residue stretch at 27 to 150 folds into the Bulb-type lectin domain; that stretch reads QERAFFSGKL…SSDAYLWESF (124 aa). The Extracellular segment spans residues 27–436; it reads QERAFFSGKL…SEIKTKDKRP (410 aa). N-linked (GlcNAc...) asparagine glycosylation is found at Asn-37, Asn-58, Asn-87, Asn-115, Asn-123, Asn-173, Asn-211, Asn-247, Asn-256, and Asn-282. The region spanning 290–326 is the EGF-like; atypical domain; it reads PATECDNYRRCGEFATCNPRKNPLCSCIRGFRPRNLI. 2 disulfides stabilise this stretch: Cys-294/Cys-306 and Cys-300/Cys-314. Asn-332 and Asn-351 each carry an N-linked (GlcNAc...) asparagine glycan. Positions 345–425 constitute a PAN domain; sequence CERQNNNGSA…SGLDLYIRLA (81 aa). 2 disulfides stabilise this stretch: Cys-379–Cys-400 and Cys-383–Cys-389. The N-linked (GlcNAc...) asparagine glycan is linked to Asn-404. The helical transmembrane segment at 437-457 threads the bilayer; the sequence is ILIGTILAGGIFVVAACVLLA. Over 458–820 the chain is Cytoplasmic; the sequence is RRIVMKKRAK…NVTITDVTGR (363 aa). Residues 509-788 form the Protein kinase domain; the sequence is FSLRNKLGQG…DIPEPKQPAF (280 aa). Residues 515-523 and Lys-537 contribute to the ATP site; that span reads LGQGGFGPV. The interval 598–615 is caM-binding; the sequence is RRAKLLDWKTRFNIINGI. Asp-634 serves as the catalytic Proton acceptor.

The protein belongs to the protein kinase superfamily. Ser/Thr protein kinase family.

It is found in the cell membrane. It catalyses the reaction L-seryl-[protein] + ATP = O-phospho-L-seryl-[protein] + ADP + H(+). It carries out the reaction L-threonyl-[protein] + ATP = O-phospho-L-threonyl-[protein] + ADP + H(+). The protein is G-type lectin S-receptor-like serine/threonine-protein kinase At1g11300 of Arabidopsis thaliana (Mouse-ear cress).